Reading from the N-terminus, the 90-residue chain is Protein S100-A6 (90 aa).

EF-hand domains follow at residues 12-47 and 48-83; these read LVAIFHKYSGQEGDKNTLSKSELKELIQKELTIGAK and LQDAEIAKLMDDLDRNKDQVVNFQEYVTFLGALAMI. Threonine 28 and glutamate 33 together coordinate Ca(2+). Lysine 40 carries the N6-acetyllysine modification. Lysine 47 carries the post-translational modification N6-acetyllysine; alternate. Lysine 47 is subject to N6-succinyllysine; alternate. 4 residues coordinate Ca(2+): aspartate 61, asparagine 63, aspartate 65, and glutamate 72.

It belongs to the S-100 family. Homodimer; head to tail assembly of 2 subunits. Interacts with CACYBP in a calcium-dependent manner. Interacts with ANXA2 and ANXA11 (via N-terminus). Interacts with SUGT1. Interacts with TP53; has higher affinity for TP53 that is phosphorylated on its N-terminal domain, and lower affinity for TP53 that is phosphorylated on its C-terminal domain. Interacts with tropomyosin. Interacts with FKBP4. Interacts with PPP5C (via TPR repeats); the interaction is calcium-dependent and modulates PPP5C activity. Interacts with TPPP; this interaction inhibits TPPP dimerization.

The protein localises to the nucleus envelope. The protein resides in the cytoplasm. Its subcellular location is the cell membrane. May function as calcium sensor and modulator, contributing to cellular calcium signaling. May function by interacting with other proteins, such as TPR-containing proteins, and indirectly play a role in many physiological processes such as the reorganization of the actin cytoskeleton and in cell motility. Binds 2 calcium ions. Calcium binding is cooperative. In Sus scrofa (Pig), this protein is Protein S100-A6 (S100A6).